Consider the following 363-residue polypeptide: UDP-N-acetylglucosamine--N-acetylmuramyl-(pentapeptide) pyrophosphoryl-undecaprenol N-acetylglucosamine transferase (363 aa).

UDP-N-acetyl-alpha-D-glucosamine-binding positions include 14-16, R171, S200, and Q290; that span reads TGG.

The protein belongs to the glycosyltransferase 28 family. MurG subfamily.

It localises to the cell inner membrane. The catalysed reaction is di-trans,octa-cis-undecaprenyl diphospho-N-acetyl-alpha-D-muramoyl-L-alanyl-D-glutamyl-meso-2,6-diaminopimeloyl-D-alanyl-D-alanine + UDP-N-acetyl-alpha-D-glucosamine = di-trans,octa-cis-undecaprenyl diphospho-[N-acetyl-alpha-D-glucosaminyl-(1-&gt;4)]-N-acetyl-alpha-D-muramoyl-L-alanyl-D-glutamyl-meso-2,6-diaminopimeloyl-D-alanyl-D-alanine + UDP + H(+). Its pathway is cell wall biogenesis; peptidoglycan biosynthesis. Cell wall formation. Catalyzes the transfer of a GlcNAc subunit on undecaprenyl-pyrophosphoryl-MurNAc-pentapeptide (lipid intermediate I) to form undecaprenyl-pyrophosphoryl-MurNAc-(pentapeptide)GlcNAc (lipid intermediate II). The chain is UDP-N-acetylglucosamine--N-acetylmuramyl-(pentapeptide) pyrophosphoryl-undecaprenol N-acetylglucosamine transferase from Borreliella burgdorferi (strain ATCC 35210 / DSM 4680 / CIP 102532 / B31) (Borrelia burgdorferi).